A 400-amino-acid chain; its full sequence is Gabija anti-defense 2 (400 aa).

Its function is as follows. Counteracts the host Gabija antiviral defense system. Probable nucleotidyltransferase. This chain is Gabija anti-defense 2, found in Bacillus phage SPbetaL7.